Here is a 129-residue protein sequence, read N- to C-terminus: 3-aminoacrylate deaminase RutC (129 aa).

This sequence belongs to the RutC family.

It catalyses the reaction (Z)-3-aminoacrylate + H2O + H(+) = 3-oxopropanoate + NH4(+). Involved in pyrimidine catabolism. Catalyzes the deamination of 3-aminoacrylate to malonic semialdehyde, a reaction that can also occur spontaneously. RutC may facilitate the reaction and modulate the metabolic fitness, rather than catalyzing essential functions. The protein is 3-aminoacrylate deaminase RutC of Caulobacter segnis (strain ATCC 21756 / DSM 7131 / JCM 7823 / NBRC 15250 / LMG 17158 / TK0059) (Mycoplana segnis).